The sequence spans 471 residues: Adenosylhomocysteinase (471 aa).

Positions 60, 135, and 196 each coordinate substrate. 197–199 (TTT) contributes to the NAD(+) binding site. Substrate-binding residues include K226 and D230. Residues N231, 260-265 (GYGDVG), E283, N318, 339-341 (IGH), and N387 contribute to the NAD(+) site.

It belongs to the adenosylhomocysteinase family. The cofactor is NAD(+).

Its subcellular location is the cytoplasm. The catalysed reaction is S-adenosyl-L-homocysteine + H2O = L-homocysteine + adenosine. Its pathway is amino-acid biosynthesis; L-homocysteine biosynthesis; L-homocysteine from S-adenosyl-L-homocysteine: step 1/1. Functionally, may play a key role in the regulation of the intracellular concentration of adenosylhomocysteine. In Chlorobium phaeobacteroides (strain DSM 266 / SMG 266 / 2430), this protein is Adenosylhomocysteinase.